The sequence spans 92 residues: Small ribosomal subunit protein bS21 (92 aa).

Residues 37–92 (QREGTFREMKRRNHYEKPSEKKARQKAEAIRRARKLARKRAQREGLIAKRGGTTRR) are disordered. Residues 51-67 (YEKPSEKKARQKAEAIR) show a composition bias toward basic and acidic residues. Over residues 68 to 77 (RARKLARKRA) the composition is skewed to basic residues.

The protein belongs to the bacterial ribosomal protein bS21 family.

This Maricaulis maris (strain MCS10) (Caulobacter maris) protein is Small ribosomal subunit protein bS21.